A 2240-amino-acid polypeptide reads, in one-letter code: MDSEAYPMKSSVKISQKKKASQDMAVICVWVMPLAVFGLIAIGQAAKTGQVQASSGSCAFHTLDGVAAESEGVRFIRLREDAQVGKEILRLQAYPRSTAALKGADASGDHKYFNLTEHNATTLVVSLARSLERLVDRDVPRNLLKFRILCAGKQEKLEEGSYLSITVYIEDVNDNAPEFLNVPYVVDVDENTSIESIIFEGVQAFDRDKPNTPNSEVHFSMSTVPEQLSADGSPYFALKSPHRPLLILKRELDFDNGIRQFKLPIFAWDRGTPANQANTTITINVRDVDDLPPKFTEGVYRTRINEFYPMTGVPIRIPLYFAPPIMAFDQDSLNASLVYDIISGNERQLFRVNPHNGVMYLQKEIDLEEESLPGNTFVLQLEARQKDNPLKKALARIEVEVLDLNDNVPEFEADYYNISIVENLPTGFSVLQVNAVDRDQGENSEFLYNLVETKDAAGAFRIDSRTGWITVRDDRLLDREQRRSIQLNVEALERNPSYLDDKHLKKPGPSKVQVEITLLDTNDNTPKFEHGNLYEFKVPINAPTGYVIGQVVAHDPDEGPNGHLLYELQRPKGSGYIPFRLDNKNGTIYVGGPLRRGRIAVFVEATDQPTNPSERRFSLAVITIEVYATIDDQAIDFVGAPYEFWVGANTPLGTSVGQVRTTLIYEGGDEIMYDLLHTYSEGVPFAIEERSGIITVIRELSEFKRKVYQFEAVANYLFANSSQSLVMSRSSSPLTTIASPAELSDEGVLITNLTIHIVNKPEQKVPLRPVIEEINMNVIHFHVEENVVGGIIGQLLYKNGINLVNNELGTYREMPSEPTSRNITMGSRFRSRNRSRSSKSKRRLPRRLVGDANIKLRYIIANQQEVVNKISITEDGTLLTLTGLDREQQPSYELTVIVEYSTGLVSGAGIYQVNIKVDDVNDNAPKFNALTYVGLINENCVVGTELSMNHAILIQDADEGPNAEFRVQLQGDYSDEFSIEYVNGTSSENSTHHKMPSTTGAFNIFNLTDQWNDEFKYQELHTTFMQTNFKLSSGPYFRISYTGKRGLDREKQQLYNLKIIAADTGGLSGYAHLTVLVADVNDNAPMFERISVFKDSRLEIREYTTDMEIYFVESSSGMTAPQATAAMMLAPPPYHIPGSPRFNVDRERSVGAGLGVVARAKSRRRMVRALTTKCPLFAIYEDTPVGTKVLQLSASDEDFGKNALLHYELQGEQVERTPGMPMLRVHGVKYFAIDKLSGELSVNYPLSANIEIMLNLTVTDIDGLKDSTCLRFTVMDVNNHAPTFKKSWYSFDTPEGEYKDSVLGQLTAIDMDFGENANITYTLSDSHLPFTIKPASGVLKIGGQLDRELKDKYSFQVIATDNAPVMQRMSSSVDVEVNVLDINDNRPEFIGYDDQTKAVKFIPSVADRTLMLPVYKAYLDRSTQPGTFVRQLTAIDKDNVGNGNGLVLYSIRHQEMQAPLFQIDSRDGTISTISRINGYNDYEHLNVSVIASDVGSPALSATAIVIVNLQGQAVTDPPKSTPKPEPPANVTVFQHAYYEVKLTENNEAPIEVMRLNLSAGLNPENYRWSLWLEEGLDETDAHPPFEYDAKNMLLYALKPFDREHISRYQLRIRADRLSREARNYARVSYPVVDERIEGLSLNECRILVHIADENDNAPKFRGNGQPIVAVLPQSASFGYPVTRVEANDLDEGLNAEIRYRLLNEPARLFGIDELSGNIRLLGELSRTEHIYGFDVKATDRMGADDGRSGIVNVFVYIINEAKQVRLVVAGMPVEVERRIEGLMEALSDAIGKDVRVRLLEPYSGGLEPATNAYIYAVDPHTNSIMEMEQLQDALAGLQLDALQLQQQKLDGGKPMPRILELAEFGQLARPAHASASSFMGGLEFVTVVLLALISLGALIAACCYVCMRQKRRLWSQRDFSASDAGLTYTIAGIGSPRGQKQRRQRQQRHTQRCSKGSTGSQRPTSAFMPESVCSSAQTQSTATATEKLEQQLHHHHQQQAMATQQQHHQYLNEQQRQQKREYIDVPLPKSIAKAAAVTSGGDGAVGVGSTPFVLKYNACQPVNNLNNYETSLFSLHSTGQDSGVEFLSSRELYETSPDSFQHGGSKRGNNTEVLCPRHAKAHLELRQPNTDSSDTYEDSLKTDEPLVAHNCRSANCEHRQHQQHPSHHPHYQNTRFEKRSCVRHSFSGVKDDLMQQSPQISLRPRGHALRNSMNDLEQRLHNLEQSFRRPLEFSKSNSLF.

5 Cadherin domains span residues 70–179 (SEGV…APEF), 180–295 (LNVP…PPKF), 296–411 (TEGV…VPEF), 412–528 (EADY…TPKF), and 529–643 (EHGN…APYE). Residues asparagine 114, asparagine 119, asparagine 191, asparagine 278, asparagine 334, asparagine 417, asparagine 585, asparagine 720, asparagine 752, asparagine 822, asparagine 833, asparagine 983, asparagine 989, asparagine 1006, asparagine 1255, asparagine 1318, asparagine 1486, asparagine 1529, and asparagine 1556 are each glycosylated (N-linked (GlcNAc...) asparagine). Positions 814–844 (MPSEPTSRNITMGSRFRSRNRSRSSKSKRRL) are disordered. 5 consecutive Cadherin domains span residues 824 to 927 (TMGS…APKF), 928 to 1087 (NALT…APMF), 1171 to 1284 (TTKC…APTF), 1285 to 1389 (KKSW…RPEF), and 1411 to 1520 (MLPV…PPKS). Residues 829–844 (FRSRNRSRSSKSKRRL) are compositionally biased toward basic residues. Cadherin domains lie at 1534–1660 (QHAY…APKF) and 1661–1774 (RGNG…MPVE). A helical membrane pass occupies residues 1884-1904 (FVTVVLLALISLGALIAACCY). Over 1905 to 2240 (VCMRQKRRLW…LEFSKSNSLF (336 aa)) the chain is Cytoplasmic. 2 disordered regions span residues 1930-1972 (IAGI…PESV) and 2121-2140 (AHLE…EDSL). A compositionally biased stretch (basic residues) spans 1939–1952 (QKQRRQRQQRHTQR). The span at 1953–1964 (CSKGSTGSQRPT) shows a compositional bias: polar residues.

The protein localises to the cell membrane. Its function is as follows. Cadherins are calcium-dependent cell adhesion proteins. They preferentially interact with themselves in a homophilic manner in connecting cells. The polypeptide is Cadherin-89D (Cad89D) (Drosophila melanogaster (Fruit fly)).